The primary structure comprises 523 residues: Nondiscriminating glutamyl-tRNA synthetase EARS2, mitochondrial (523 aa).

A mitochondrion-targeting transit peptide spans 1–41; sequence MAALLRRLLQRERPSAASGRPVGRREANLGTDAGVAVRVRF. 40-42 lines the L-glutamate pocket; it reads RFA. The 'HIGH' region signature appears at 45–53; it reads PTGFLHLGG. Histidine 50 lines the ATP pocket. L-glutamate is bound by residues glutamate 76, 228 to 232, and arginine 246; that span reads YHLAC. ATP is bound at residue glutamate 249. Lysine 256 is modified (N6-succinyllysine). 284 to 288 is an ATP binding site; it reads KLSKR. Residues 284–288 carry the 'KMSKS' region motif; it reads KLSKR. Residue lysine 486 is modified to N6-acetyllysine.

It belongs to the class-I aminoacyl-tRNA synthetase family. Glutamate--tRNA ligase type 1 subfamily.

Its subcellular location is the mitochondrion matrix. The catalysed reaction is tRNA(Glx) + L-glutamate + ATP = L-glutamyl-tRNA(Glx) + AMP + diphosphate. It carries out the reaction tRNA(Glu) + L-glutamate + ATP = L-glutamyl-tRNA(Glu) + AMP + diphosphate. It catalyses the reaction tRNA(Gln) + L-glutamate + ATP = L-glutamyl-tRNA(Gln) + AMP + diphosphate. Non-discriminating glutamyl-tRNA synthetase that catalyzes aminoacylation of both mitochondrial tRNA(Glu) and tRNA(Gln) and participates in RNA aminoacylation for mitochondrial protein translation. Attachs glutamate to tRNA(Glu) or tRNA(Gln) in a two-step reaction: glutamate is first activated by ATP to form Glu-AMP and then transferred to the acceptor end of tRNA(Glu) or tRNA(Gln). In vitro, cytoplasmic tRNA(Gln) is slightly glutamylated, but with low activity. This chain is Nondiscriminating glutamyl-tRNA synthetase EARS2, mitochondrial, found in Homo sapiens (Human).